The sequence spans 158 residues: Glycine/sarcosine/betaine reductase complex component A (158 aa).

Residue Sec44 is part of the active site. Sec44 is a non-standard amino acid (selenocysteine).

This sequence belongs to the GrdA family. In terms of assembly, monomer. Component of the glycine, sarcosine and betaine reductase complexes, together with components B and C.

The enzyme catalyses acetyl phosphate + [thioredoxin]-disulfide + NH4(+) + H2O = [thioredoxin]-dithiol + glycine + phosphate + H(+). It carries out the reaction acetyl phosphate + methylamine + [thioredoxin]-disulfide + H2O = sarcosine + [thioredoxin]-dithiol + phosphate + H(+). The catalysed reaction is acetyl phosphate + trimethylamine + [thioredoxin]-disulfide + H2O = glycine betaine + [thioredoxin]-dithiol + phosphate + H(+). In terms of biological role, in the first step of glycine, betaine and sarcosine reductases, the substrate is bound to component PB via a Schiff base intermediate. Then the PB-activated substrate is nucleophilically attacked by the selenol anion of component PA to transform it to a carboxymethylated selenoether and the respective amine. By action of component PC, acetyl phosphate is formed, leaving component PA in its oxidized state. Finally component PA becomes reduced by the thioredoxin system to start a new catalytic cycle of reductive deamination. This chain is Glycine/sarcosine/betaine reductase complex component A, found in Alkaliphilus metalliredigens (strain QYMF).